The following is a 394-amino-acid chain: Phosphoglycerate kinase (394 aa).

Residues 21–23 (DFN), Arg-36, 59–62 (HLGR), Arg-118, and Arg-151 each bind substrate. Ser-183 is subject to Phosphoserine. Lys-201 and Gly-292 together coordinate ATP. Residue Thr-299 is modified to Phosphothreonine. ATP is bound by residues Glu-323 and 350–353 (GGDS).

It belongs to the phosphoglycerate kinase family. As to quaternary structure, monomer.

It localises to the cytoplasm. The enzyme catalyses (2R)-3-phosphoglycerate + ATP = (2R)-3-phospho-glyceroyl phosphate + ADP. Its pathway is carbohydrate degradation; glycolysis; pyruvate from D-glyceraldehyde 3-phosphate: step 2/5. The polypeptide is Phosphoglycerate kinase (Bacillus thuringiensis subsp. konkukian (strain 97-27)).